The sequence spans 726 residues: Endo-1,4-beta-xylanase/feruloyl esterase (726 aa).

Residues 1–19 (MKKLLVALSLIAGSLTASA) form the signal peptide. A GH10 domain is found at 27–369 (YAAGPGLKDA…KRSLQIIRDF (343 aa)). Catalysis depends on Glu-161, which acts as the Proton donor; for xylanase activity. Glu-280 functions as the Nucleophile; for xylanase activity in the catalytic mechanism. Residues 370-726 (DAAMDNRKPK…LEKMAQSLFK (357 aa)) form a feruloyl esterase region. The active-site Nucleophile; for esterase activity is the Ser-629.

It in the N-terminal section; belongs to the glycosyl hydrolase 10 (cellulase F) family. As to quaternary structure, monomer or homodimer.

It carries out the reaction Endohydrolysis of (1-&gt;4)-beta-D-xylosidic linkages in xylans.. The enzyme catalyses feruloyl-polysaccharide + H2O = ferulate + polysaccharide.. It functions in the pathway glycan degradation; xylan degradation. In terms of biological role, involved in degradation of plant cell wall polysaccharides. Has endo-xylanase activity towards substrates such as oat spelt xylan (OSX), acetylated xylo-oligosaccharides and acetylated xylan, producing primarily xylobiose; cannot hydrolyze xylobiose to xylose. Also has feruloyl esterase activity, releasing ferulic acid from methylferulate, and from the more natural substrates wheat bran, corn fiber, and XOS(FA,Ac), a corn fiber-derived substrate enriched in O-acetyl and ferulic acid esters. Exhibits negligible acetyl esterase activity on sugar acetates. Acts synergistically with Xyl3A to increase the release of xylose from xylan. Does not possess endoglucanase or mannanase activities since it is not able to hydrolyze carboxymethyl cellulose and locust bean gum. The chain is Endo-1,4-beta-xylanase/feruloyl esterase from Xylanibacter ruminicola (strain ATCC 19189 / DSM 19721 / CIP 105475 / JCM 8958 / 23) (Prevotella ruminicola).